We begin with the raw amino-acid sequence, 272 residues long: Nitrogenase iron protein (272 aa).

Position 8 to 15 (8 to 15 (GKGGIGKS)) interacts with ATP. Residue C94 coordinates [4Fe-4S] cluster. R97 carries the ADP-ribosylarginine; by dinitrogenase reductase ADP-ribosyltransferase modification. C129 lines the [4Fe-4S] cluster pocket.

It belongs to the NifH/BchL/ChlL family. As to quaternary structure, homodimer. The cofactor is [4Fe-4S] cluster. The reversible ADP-ribosylation of Arg-97 inactivates the nitrogenase reductase and regulates nitrogenase activity.

The enzyme catalyses N2 + 8 reduced [2Fe-2S]-[ferredoxin] + 16 ATP + 16 H2O = H2 + 8 oxidized [2Fe-2S]-[ferredoxin] + 2 NH4(+) + 16 ADP + 16 phosphate + 6 H(+). The key enzymatic reactions in nitrogen fixation are catalyzed by the nitrogenase complex, which has 2 components: the iron protein and the molybdenum-iron protein. This Desulforamulus reducens (strain ATCC BAA-1160 / DSM 100696 / MI-1) (Desulfotomaculum reducens) protein is Nitrogenase iron protein.